The chain runs to 818 residues: BDNF/NT-3 growth factors receptor (818 aa).

The signal sequence occupies residues 1–31 (MVSWRRRPGPGLARLWGLCCLVLGCWRGALG). Disulfide bonds link Cys-32/Cys-38 and Cys-36/Cys-45. Topologically, residues 32 to 426 (CPASCRCSSW…DVSNKENEDS (395 aa)) are extracellular. The N-linked (GlcNAc...) asparagine glycan is linked to Asn-66. The stretch at 71 to 92 (YIANQRKLESINDNEVGFYVGL) is one LRR 1 repeat. Asn-94 carries N-linked (GlcNAc...) asparagine glycosylation. Residues 95–116 (LTVVDSGLRFVSRQAFVKNINL) form an LRR 2 repeat. Asn-120 carries N-linked (GlcNAc...) asparagine glycosylation. Intrachain disulfides connect Cys-151–Cys-175 and Cys-153–Cys-193. One can recognise an Ig-like C2-type 1 domain in the interval 196–281 (PSANLSNYNI…GEVQTSAELT (86 aa)). N-linked (GlcNAc...) asparagine glycosylation is found at Asn-199, Asn-204, Asn-226, Asn-253, Asn-287, Asn-324, and Asn-337. Cys-217 and Cys-265 are oxidised to a cystine. The region spanning 295–364 (TPDHHWCIPF…NGAYTLLAKN (70 aa)) is the Ig-like C2-type 2 domain. A disulfide bond links Cys-301 and Cys-344. The provides specificity for BDNF as ligand versus NTF3 and NTF4 stretch occupies residues 384–394 (GSGPIVDPDVY). Over residues 400-418 (PNDLGDTTNNSNQITSPDV) the composition is skewed to polar residues. The segment at 400–420 (PNDLGDTTNNSNQITSPDVSN) is disordered. Asn-408 carries N-linked (GlcNAc...) asparagine glycosylation. The chain crosses the membrane as a helical span at residues 427–450 (ITVYVVVGIAALVCTGLVIMLIIL). At 451–818 (KFGRHSKFGM…ASPVYLDILG (368 aa)) the chain is on the cytoplasmic side. Positions 469-494 (NDDDSASPLHHISNGSNTPSSSEGGP) are disordered. Over residues 481–491 (SNGSNTPSSSE) the composition is skewed to polar residues. Phosphotyrosine; by autocatalysis is present on Tyr-512. Residues 534 to 803 (IVLKRELGEG…LNIKEIHSLL (270 aa)) enclose the Protein kinase domain. ATP-binding positions include 540-548 (LGEGAFGKV) and Lys-568. Asp-672 functions as the Proton acceptor in the catalytic mechanism. Phosphotyrosine; by autocatalysis occurs at positions 698, 702, 703, and 813.

The protein belongs to the protein kinase superfamily. Tyr protein kinase family. Insulin receptor subfamily. In terms of assembly, exists in a dynamic equilibrium between monomeric (low affinity) and dimeric (high affinity) structures. Interacts (phosphorylated upon activation by BDNF) with SHC1; mediates SHC1 phosphorylation and activation. Interacts (phosphorylated upon activation by BDNF) with PLCG1 and/or PLCG2; mediates PLCG1 phosphorylation and activation. Interacts with SH2B1 and SH2B2. Interacts with NGFR; may regulate the ligand specificity of the receptor. Interacts with SORCS2; this interaction is important for normal targeting to post-synaptic densities in response to high-frequency stimulation. Interacts (phosphorylated upon ligand-binding) with SH2D1A; regulates NTRK2. Interacts with SQSTM1 and KIDINS220. Interacts (phosphorylated upon ligand-binding) with FRS2; activates the MAPK signaling pathway. Interacts with APPL1. Interacts with MAPK8IP3/JIP3 and KLC1; interaction with KLC1 is mediated by MAPK8IP3/JIP3. Post-translationally, ligand-mediated auto-phosphorylation. Detected in embryonic brain and orsal root ganglia.

Its subcellular location is the cell membrane. The protein localises to the endosome membrane. It is found in the cell projection. It localises to the axon. The protein resides in the dendrite. Its subcellular location is the cytoplasm. The protein localises to the perinuclear region. It is found in the postsynaptic density. It catalyses the reaction L-tyrosyl-[protein] + ATP = O-phospho-L-tyrosyl-[protein] + ADP + H(+). With respect to regulation, the neuronal activity and the influx of calcium positively regulate the kinase activity and the internalization of the receptor which are both important for active signaling. Regulated by NGFR that may control the internalization of the receptor. NGFR may also stimulate the activation by BDNF compared to NTF3 and NTF4. The formation of active receptors dimers able to fully transduce the ligand-mediated signal, may be negatively regulated by the formation of inactive heterodimers with the non-catalytic isoforms. Receptor tyrosine kinase involved in the development and the maturation of the central and the peripheral nervous systems through regulation of neuron survival, proliferation, migration, differentiation, and synapse formation and plasticity. Receptor for BDNF/brain-derived neurotrophic factor and NTF4/neurotrophin-4. Alternatively can also bind NTF3/neurotrophin-3 which is less efficient in activating the receptor but regulates neuron survival through NTRK2. Upon ligand-binding, undergoes homodimerization, autophosphorylation and activation. Recruits, phosphorylates and/or activates several downstream effectors including SHC1, FRS2, SH2B1, SH2B2 and PLCG1 that regulate distinct overlapping signaling cascades. Through SHC1, FRS2, SH2B1, SH2B2 activates the GRB2-Ras-MAPK cascade that regulates for instance neuronal differentiation including neurite outgrowth. Through the same effectors controls the Ras-PI3 kinase-AKT1 signaling cascade that mainly regulates growth and survival. Through PLCG1 and the downstream protein kinase C-regulated pathways controls synaptic plasticity. Thereby, plays a role in learning and memory by regulating both short term synaptic function and long-term potentiation. PLCG1 also leads to NF-Kappa-B activation and the transcription of genes involved in cell survival. Hence, it is able to suppress anoikis, the apoptosis resulting from loss of cell-matrix interactions. May also play a role in neutrophin-dependent calcium signaling in glial cells and mediate communication between neurons and glia. The chain is BDNF/NT-3 growth factors receptor (NTRK2) from Gallus gallus (Chicken).